Consider the following 511-residue polypeptide: Cytochrome P450 714C3 (511 aa).

Topologically, residues 1 to 6 are lumenal; the sequence is MEKLLA. A helical; Signal-anchor for type III membrane protein transmembrane segment spans residues 7–27; that stretch reads LIVVLVILLSLALFYLCNILW. Topologically, residues 28 to 511 are cytoplasmic; the sequence is LRAVKIRKKL…GLPLMVTKLP (484 aa). Cys458 provides a ligand contact to heme.

The protein belongs to the cytochrome P450 family. Requires heme as cofactor.

It is found in the membrane. This Oryza sativa subsp. japonica (Rice) protein is Cytochrome P450 714C3 (CYP714C3).